The chain runs to 316 residues: tRNA-cytidine(32) 2-sulfurtransferase (316 aa).

Positions 58-63 (SGGKDS) match the PP-loop motif motif. Positions 133, 136, and 224 each coordinate [4Fe-4S] cluster.

This sequence belongs to the TtcA family. As to quaternary structure, homodimer. It depends on Mg(2+) as a cofactor. [4Fe-4S] cluster serves as cofactor.

The protein resides in the cytoplasm. It carries out the reaction cytidine(32) in tRNA + S-sulfanyl-L-cysteinyl-[cysteine desulfurase] + AH2 + ATP = 2-thiocytidine(32) in tRNA + L-cysteinyl-[cysteine desulfurase] + A + AMP + diphosphate + H(+). It participates in tRNA modification. Its function is as follows. Catalyzes the ATP-dependent 2-thiolation of cytidine in position 32 of tRNA, to form 2-thiocytidine (s(2)C32). The sulfur atoms are provided by the cysteine/cysteine desulfurase (IscS) system. In Aromatoleum aromaticum (strain DSM 19018 / LMG 30748 / EbN1) (Azoarcus sp. (strain EbN1)), this protein is tRNA-cytidine(32) 2-sulfurtransferase.